The following is a 636-amino-acid chain: Autophagy-related protein 20 (636 aa).

Disordered stretches follow at residues 1–68 (MQIN…QPHE) and 84–163 (NYMQ…EGKK). Positions 10–23 (NSVTHLENNSPSRL) are enriched in polar residues. Over residues 27 to 49 (KTVEEHKEHEPDLQTQSEMRRES) the composition is skewed to basic and acidic residues. Polar residues predominate over residues 50–64 (NGSPKDTAVTNQNGD). A compositionally biased stretch (basic residues) spans 122 to 133 (NRRKNSKERRRS). In terms of domain architecture, PX spans 160–305 (EGKKRAQILE…DFLDPNNKNW (146 aa)). Residues R196, S198, K222, and R271 each contribute to the a 1,2-diacyl-sn-glycero-3-phospho-(1D-myo-inositol-3-phosphate) site.

It belongs to the sorting nexin family.

The protein resides in the endosome membrane. It is found in the preautophagosomal structure membrane. Its function is as follows. Required for cytoplasm to vacuole transport (Cvt), pexophagy and mitophagy. Also involved in endoplasmic reticulum-specific autophagic process and is essential for the survival of cells subjected to severe ER stress. Functions in protein retrieval from the endocytic pathway. In Kluyveromyces lactis (strain ATCC 8585 / CBS 2359 / DSM 70799 / NBRC 1267 / NRRL Y-1140 / WM37) (Yeast), this protein is Autophagy-related protein 20 (ATG20).